The following is a 454-amino-acid chain: Light-independent protochlorophyllide reductase subunit N (454 aa).

Residues C22, C47, and C107 each coordinate [4Fe-4S] cluster.

It belongs to the BchN/ChlN family. In terms of assembly, protochlorophyllide reductase is composed of three subunits; ChlL, ChlN and ChlB. Forms a heterotetramer of two ChlB and two ChlN subunits. It depends on [4Fe-4S] cluster as a cofactor.

The protein localises to the plastid. It localises to the chloroplast. It carries out the reaction chlorophyllide a + oxidized 2[4Fe-4S]-[ferredoxin] + 2 ADP + 2 phosphate = protochlorophyllide a + reduced 2[4Fe-4S]-[ferredoxin] + 2 ATP + 2 H2O. It participates in porphyrin-containing compound metabolism; chlorophyll biosynthesis (light-independent). Component of the dark-operative protochlorophyllide reductase (DPOR) that uses Mg-ATP and reduced ferredoxin to reduce ring D of protochlorophyllide (Pchlide) to form chlorophyllide a (Chlide). This reaction is light-independent. The NB-protein (ChlN-ChlB) is the catalytic component of the complex. The chain is Light-independent protochlorophyllide reductase subunit N from Cycas taitungensis (Prince sago).